The sequence spans 500 residues: MEVGSNEVKGKIVEVLGPVVDAEFPRDGVPDILDALRIEREDSRDLILEVQQHLGERRVRAIAMDSTDGLQRGQAIAATNQPISVPIGEEIRGRLFNVVGQPIDGLPEPDVDERRAIHQDPPEYNELTGSQEVLETGIKVMDLIQPVPKGGKVGLFGGAGVGKTVLIMELINNIAKAHEGLSVFSGVGERTREGNDLLREMIEAGVMTYGEEFRESMESGGWDLDKVDFDEMNSESNISLVFGQMNEPPGARARVGLTGLTIAEYFRDLGGRDVLFFLDNIFRFVQAGQEMSALMGRMPSAVGYQPTLASEMGDLQERITSTQEGSITSFQAVYVPADDLTDPAPATTFAHLDCTTVLSRQLSTQGIYPAIDPLDSTSQMLNERALGTEHYETAQDVKEILQRYEELQDIIAILGMDELSDEDKQAVNRARRVQRFLSQPFFVAEQFTGQPGKYVPIEETIRGFRMILDGELDHLPERAFLLKGTIDEVIEAGEEMAEEA.

157 to 164 serves as a coordination point for ATP; it reads GGAGVGKT.

This sequence belongs to the ATPase alpha/beta chains family. As to quaternary structure, F-type ATPases have 2 components, CF(1) - the catalytic core - and CF(0) - the membrane proton channel. CF(1) has five subunits: alpha(3), beta(3), gamma(1), delta(1), epsilon(1). CF(0) has three main subunits: a(1), b(2) and c(9-12). The alpha and beta chains form an alternating ring which encloses part of the gamma chain. CF(1) is attached to CF(0) by a central stalk formed by the gamma and epsilon chains, while a peripheral stalk is formed by the delta and b chains.

It is found in the cell inner membrane. It catalyses the reaction ATP + H2O + 4 H(+)(in) = ADP + phosphate + 5 H(+)(out). In terms of biological role, produces ATP from ADP in the presence of a proton gradient across the membrane. The catalytic sites are hosted primarily by the beta subunits. In Salinibacter ruber (strain DSM 13855 / M31), this protein is ATP synthase subunit beta.